A 511-amino-acid polypeptide reads, in one-letter code: 2,3-bisphosphoglycerate-independent phosphoglycerate mutase (511 aa).

Residues D14 and S64 each coordinate Mn(2+). S64 serves as the catalytic Phosphoserine intermediate. Substrate contacts are provided by residues H125, 155–156, R187, R193, 259–262, and K333; these read RD and RADR. Mn(2+)-binding residues include D400, H404, D441, H442, and H460.

It belongs to the BPG-independent phosphoglycerate mutase family. Monomer. It depends on Mn(2+) as a cofactor.

The enzyme catalyses (2R)-2-phosphoglycerate = (2R)-3-phosphoglycerate. It functions in the pathway carbohydrate degradation; glycolysis; pyruvate from D-glyceraldehyde 3-phosphate: step 3/5. Its function is as follows. Catalyzes the interconversion of 2-phosphoglycerate and 3-phosphoglycerate. The polypeptide is 2,3-bisphosphoglycerate-independent phosphoglycerate mutase (Pseudomonas putida (strain GB-1)).